Consider the following 792-residue polypeptide: Leucine--tRNA ligase (792 aa).

The 'HIGH' region signature appears at 39 to 50 (PYPSAAGLHLGH). The 'KMSKS' region signature appears at 569–573 (KMSKS). Lysine 572 is a binding site for ATP.

The protein belongs to the class-I aminoacyl-tRNA synthetase family.

It is found in the cytoplasm. The enzyme catalyses tRNA(Leu) + L-leucine + ATP = L-leucyl-tRNA(Leu) + AMP + diphosphate. This Mycoplasma genitalium (strain ATCC 33530 / DSM 19775 / NCTC 10195 / G37) (Mycoplasmoides genitalium) protein is Leucine--tRNA ligase.